A 554-amino-acid chain; its full sequence is MAYYQQPHDITRLPAWQALQQHRAEMAGFSMREAFAGDPRRFQRFSLDSCGLLLDYSKNLITEKSLELLIQLAEQADLHEAIAALYNGERVNASEGRAALHTALRSPIGRRLLVDGNDIIPEVHRVLNQVTELVSRIHSGLWRGYSEKPIKEVVNIGIGGSFLGPQLVSEALRPFTQRGVRCHYLANIDGSEFRELTARLDPETTLFIVSSKSFGTLETLKNTLAARDWYLAMGGPEEQLHRHFIAVTSNRKAAIEFGIGEENIFPMWDWVGGRYSLWSAIGLPIALAIGVSNFKELLAGAYAMDEHFTQAPLAENMPVLMALLGVWYTNFWGAQSHAILPYDHYLRNFTKHLQQLDMESNGKSVRQDGTPLDIATGPIIWGGVGCNGQHAYHQLLHQGRLLVPADFIVPVNSYNPLSDHHQWLFANCLSQAQALMQGKTREEAEVELRAKGLSEDEVQRLAPHKVIPGNRPSNILVMNRIAPFNLGALVALYEHKVFVQSAIWGINAFDQWGVELGKEMGKEVYQRLTGASGEPASDASTQGLIEHFRSQHRG.

Glutamate 359 functions as the Proton donor in the catalytic mechanism. Active-site residues include histidine 390 and lysine 518.

This sequence belongs to the GPI family.

The protein resides in the cytoplasm. The enzyme catalyses alpha-D-glucose 6-phosphate = beta-D-fructose 6-phosphate. The protein operates within carbohydrate biosynthesis; gluconeogenesis. It functions in the pathway carbohydrate degradation; glycolysis; D-glyceraldehyde 3-phosphate and glycerone phosphate from D-glucose: step 2/4. Catalyzes the reversible isomerization of glucose-6-phosphate to fructose-6-phosphate. This Ectopseudomonas mendocina (strain ymp) (Pseudomonas mendocina) protein is Glucose-6-phosphate isomerase.